We begin with the raw amino-acid sequence, 209 residues long: MVKVNIIFHSVHAHIYRMAEAVAAGAREVEGAEVGIYQVPETLPEDVLEKMGAIETKKLFAHIPVVTRDMYEDVLAGADALIFGTPTRYGMMTAQMRAVLDGLGKLWSEDAFVGKVGSVFTSSGTQHGGQESTILSFHVTLLHLGMVIVGLPYAEKRQTIMNEITGGSPYGASTIAGGDGSRQPSENELEMARYQGRHVTQIAKKIAGK.

The 196-residue stretch at 4-199 (VNIIFHSVHA…EMARYQGRHV (196 aa)) folds into the Flavodoxin-like domain. FMN contacts are provided by residues 10 to 15 (SVHAHI) and 87 to 89 (TRY). Tryptophan 107 contacts substrate. FMN-binding positions include 122–128 (SSGTQHG) and histidine 143.

This sequence belongs to the WrbA family. Requires FMN as cofactor.

The catalysed reaction is a quinone + NADH + H(+) = a quinol + NAD(+). It catalyses the reaction a quinone + NADPH + H(+) = a quinol + NADP(+). The protein is NAD(P)H dehydrogenase (quinone) of Methanosarcina mazei (strain ATCC BAA-159 / DSM 3647 / Goe1 / Go1 / JCM 11833 / OCM 88) (Methanosarcina frisia).